A 1168-amino-acid chain; its full sequence is Transcription-repair-coupling factor (1168 aa).

The 162-residue stretch at aspartate 633–isoleucine 794 folds into the Helicase ATP-binding domain. Glycine 646–threonine 653 is a binding site for ATP. Residues aspartate 747 to glutamine 750 carry the DEEQ box motif. A Helicase C-terminal domain is found at valine 808–asparagine 969.

The protein in the N-terminal section; belongs to the UvrB family. It in the C-terminal section; belongs to the helicase family. RecG subfamily.

The protein resides in the cytoplasm. In terms of biological role, couples transcription and DNA repair by recognizing RNA polymerase (RNAP) stalled at DNA lesions. Mediates ATP-dependent release of RNAP and its truncated transcript from the DNA, and recruitment of nucleotide excision repair machinery to the damaged site. This chain is Transcription-repair-coupling factor, found in Staphylococcus aureus (strain MRSA252).